Consider the following 614-residue polypeptide: Two-component response regulator ORR33 (614 aa).

Residues 14 to 139 enclose the Response regulatory domain; it reads RVMIIDDDAK…VMARLWRVVA (126 aa). D67 carries the post-translational modification 4-aspartylphosphate. A disordered region spans residues 193 to 220; the sequence is RQLTINVVDDGNRGSGSGGGGGGGADAN. Residues 205 to 217 are compositionally biased toward gly residues; sequence RGSGSGGGGGGGA.

It belongs to the ARR family. Type-B subfamily. Post-translationally, two-component system major event consists of a His-to-Asp phosphorelay between a sensor histidine kinase (HK) and a response regulator (RR). In plants, the His-to-Asp phosphorelay involves an additional intermediate named Histidine-containing phosphotransfer protein (HPt). This multistep phosphorelay consists of a His-Asp-His-Asp sequential transfer of a phosphate group between first a His and an Asp of the HK protein, followed by the transfer to a conserved His of the HPt protein and finally the transfer to an Asp in the receiver domain of the RR protein.

In terms of biological role, functions as a response regulator involved in His-to-Asp phosphorelay signal transduction system. Phosphorylation of the Asp residue in the receiver domain activates the ability of the protein to promote the transcription of target genes. May directly activate some type-A response regulators in response to cytokinins. This chain is Two-component response regulator ORR33, found in Oryza sativa subsp. indica (Rice).